The chain runs to 354 residues: UPF0283 membrane protein CGSHiGG_02710 (354 aa).

The next 3 membrane-spanning stretches (helical) occupy residues 57 to 77 (LLKF…VQWI), 87 to 107 (IYLA…KEII), and 211 to 231 (ESAV…FIAW).

The protein belongs to the UPF0283 family.

It localises to the cell inner membrane. This chain is UPF0283 membrane protein CGSHiGG_02710, found in Haemophilus influenzae (strain PittGG).